A 115-amino-acid polypeptide reads, in one-letter code: Large ribosomal subunit protein bL19 (115 aa).

The protein belongs to the bacterial ribosomal protein bL19 family.

Its function is as follows. This protein is located at the 30S-50S ribosomal subunit interface and may play a role in the structure and function of the aminoacyl-tRNA binding site. The protein is Large ribosomal subunit protein bL19 of Shouchella clausii (strain KSM-K16) (Alkalihalobacillus clausii).